We begin with the raw amino-acid sequence, 287 residues long: D-apionate oxidoisomerase (287 aa).

NAD(+)-binding positions include 13-15 (GKM), Glu-36, and Asp-71. The Zn(2+) site is built by His-116 and Glu-186.

The protein belongs to the ApnO family. It depends on Zn(2+) as a cofactor.

The enzyme catalyses D-apionate + NAD(+) = 3-oxoisoapionate + NADH + H(+). It functions in the pathway carbohydrate metabolism. In terms of biological role, involved in catabolism of D-apiose. Catalyzes the conversion of D-apionate to 3-oxo-isoapionate. This Blautia hydrogenotrophica (strain DSM 10507 / JCM 14656 / S5a33) (Ruminococcus hydrogenotrophicus) protein is D-apionate oxidoisomerase.